An 882-amino-acid chain; its full sequence is Cadherin-1 (882 aa).

The first 23 residues, 1–23 (MGPWSRSLSALCCCCRCNPWLCR), serve as a signal peptide directing secretion. Positions 24–154 (EPEPCIPGFG…PHHGLRRQKR (131 aa)) are excised as a propeptide. The segment at 117-137 (EVSAHHHHHHSHHDSPSGTQT) is disordered. Cadherin domains follow at residues 154–262 (RDWV…KPQF), 263–375 (TQEV…APRF), 376–486 (NPTT…APIF), 487–595 (VPPQ…GPVP), and 594–702 (VPEP…RPAE). Residues 155 to 709 (DWVIPPISCP…PAEAGLQVPA (555 aa)) are Extracellular-facing. A glycan (O-linked (Man...) serine) is linked at S280. 5 O-linked (Man...) threonine glycosylation sites follow: T285, T358, T470, T472, and T509. N-linked (GlcNAc...) asparagine glycosylation occurs at N558. Residues T576, T578, and T580 are each glycosylated (O-linked (Man...) threonine). N637 is a glycosylation site (N-linked (GlcNAc...) asparagine). A helical membrane pass occupies residues 710–730 (ILGILGGILAFLILILLLLLL). Topologically, residues 731–882 (VRRRRVVKEP…ADMYGGGEDD (152 aa)) are cytoplasmic. A disordered region spans residues 747-767 (DTRDNVYYYDEEGGGEEDQDF). 3 positions are modified to phosphotyrosine; by SRC: Y753, Y754, and Y755. Positions 755 to 767 (YDEEGGGEEDQDF) are enriched in acidic residues. The segment at 758-769 (EGGGEEDQDFDL) is required for binding CTNND1 and PSEN1. S770, S793, S838, S840, and S846 each carry phosphoserine. The required for binding alpha, beta and gamma catenins stretch occupies residues 811 to 882 (IDENLKAADS…ADMYGGGEDD (72 aa)).

Homodimer; disulfide-linked. Component of an E-cadherin/ catenin adhesion complex composed of at least E-cadherin/CDH1, beta-catenin/CTNNB1 or gamma-catenin/JUP, and potentially alpha-catenin/CTNNA1; the complex is located to adherens junctions. Found in a complex composed of CDH1, RAP1A and PKP3; PKP3 acts as a scaffold protein within the complex, the complex is required for CDH1 localization to mature desmosome cell junctions. Interacts with the TRPV4 and CTNNB1 complex. Interacts with CTNND1. The stable association of CTNNA1 is controversial as CTNNA1 was shown not to bind to F-actin when assembled in the complex. Alternatively, the CTNNA1-containing complex may be linked to F-actin by other proteins such as LIMA1. Interaction with PSEN1, cleaves CDH1 resulting in the disassociation of cadherin-based adherens junctions (CAJs). Interacts with AJAP1 and DLGAP5. Interacts with TBC1D2. Interacts with CAV1. Interacts with PIP5K1C. Interacts with RAB8B. Interacts with DDR1; this stabilizes CDH1 at the cell surface and inhibits its internalization. Interacts with RAPGEF2. Interacts with KLRG1. Forms a ternary complex composed of ADAM10, CADH1 and EPHA4; within the complex, CADH1 is cleaved by ADAM10 which disrupts adherens junctions. Interacts with SPEF1. Interacts with CTNNB1 and PKP2. Interacts with AMOTL2; the interaction may facilitate binding of radial actin fibers to cell junction complexes. Interacts with DSG3; the interaction is required for CDH1 localization to developing adherens junctions. In terms of processing, during apoptosis or with calcium influx, cleaved by a membrane-bound metalloproteinase (ADAM10), PS1/gamma-secretase and caspase-3. Processing by the metalloproteinase, induced by calcium influx, causes disruption of cell-cell adhesion and the subsequent release of beta-catenin into the cytoplasm. The residual membrane-tethered cleavage product is rapidly degraded via an intracellular proteolytic pathway. Cleavage by caspase-3 releases the cytoplasmic tail resulting in disintegration of the actin microfilament system. The gamma-secretase-mediated cleavage promotes disassembly of adherens junctions. During development of the cochlear organ of Corti, cleavage by ADAM10 at adherens junctions promotes pillar cell separation. Post-translationally, N-glycosylation at Asn-637 is essential for expression, folding and trafficking. Addition of bisecting N-acetylglucosamine by MGAT3 modulates its cell membrane location. Ubiquitinated by a SCF complex containing SKP2, which requires prior phosphorylation by CK1/CSNK1A1. Ubiquitinated by CBLL1/HAKAI, requires prior phosphorylation at Tyr-754. In terms of processing, O-glycosylated. O-manosylated by TMTC1, TMTC2, TMTC3 or TMTC4. Thr-285 and Thr-509 are O-mannosylated by TMTC2 or TMTC4 but not TMTC1 or TMTC3.

It localises to the cell junction. It is found in the adherens junction. Its subcellular location is the cell membrane. The protein localises to the endosome. The protein resides in the golgi apparatus. It localises to the trans-Golgi network. It is found in the cytoplasm. Its subcellular location is the desmosome. In terms of biological role, cadherins are calcium-dependent cell adhesion proteins. They preferentially interact with themselves in a homophilic manner in connecting cells; cadherins may thus contribute to the sorting of heterogeneous cell types. CDH1 is involved in mechanisms regulating cell-cell adhesions, mobility and proliferation of epithelial cells. Promotes organization of radial actin fiber structure and cellular response to contractile forces, via its interaction with AMOTL2 which facilitates anchoring of radial actin fibers to CDH1 junction complexes at the cell membrane. Plays a role in the early stages of desmosome cell-cell junction formation via facilitating the recruitment of DSG2 and DSP to desmosome plaques. Has a potent invasive suppressor role. It is a ligand for integrin alpha-E/beta-7. Functionally, E-Cad/CTF2 promotes non-amyloidogenic degradation of Abeta precursors. Has a strong inhibitory effect on APP C99 and C83 production. In Bos taurus (Bovine), this protein is Cadherin-1 (CDH1).